The following is a 510-amino-acid chain: ATP synthase subunit alpha (510 aa).

Residue 170 to 177 participates in ATP binding; that stretch reads GDRQTGKT.

It belongs to the ATPase alpha/beta chains family. F-type ATPases have 2 components, CF(1) - the catalytic core - and CF(0) - the membrane proton channel. CF(1) has five subunits: alpha(3), beta(3), gamma(1), delta(1), epsilon(1). CF(0) has three main subunits: a(1), b(2) and c(9-12). The alpha and beta chains form an alternating ring which encloses part of the gamma chain. CF(1) is attached to CF(0) by a central stalk formed by the gamma and epsilon chains, while a peripheral stalk is formed by the delta and b chains.

The protein resides in the cell inner membrane. It catalyses the reaction ATP + H2O + 4 H(+)(in) = ADP + phosphate + 5 H(+)(out). Functionally, produces ATP from ADP in the presence of a proton gradient across the membrane. The alpha chain is a regulatory subunit. This Dictyoglomus thermophilum (strain ATCC 35947 / DSM 3960 / H-6-12) protein is ATP synthase subunit alpha.